The following is a 436-amino-acid chain: UPF0597 protein YhaM (436 aa).

Belongs to the UPF0597 family.

This chain is UPF0597 protein YhaM, found in Salmonella dublin (strain CT_02021853).